We begin with the raw amino-acid sequence, 110 residues long: Toxin HigB-2 (110 aa).

Toxic component of a type II toxin-antitoxin (TA) system. Inhibits translation by cleavage of mRNA. This chain is Toxin HigB-2 (higB-2), found in Vibrio cholerae serotype O1 (strain ATCC 39315 / El Tor Inaba N16961).